The primary structure comprises 467 residues: Gamma-aminobutyric acid receptor subunit gamma-3 (467 aa).

A signal peptide spans 1–17 (MAAKLLLLLCLFSGLHA). Residues 18–256 (RSRRVEEDEN…FELSRRMGYF (239 aa)) are Extracellular-facing. N-linked (GlcNAc...) asparagine glycosylation is present at asparagine 110. A disulfide bond links cysteine 171 and cysteine 185. Asparagine 228 carries an N-linked (GlcNAc...) asparagine glycan. The chain crosses the membrane as a helical span at residues 257–277 (TIQTYIPCILTVVLSWVSFWI). The Cytoplasmic segment spans residues 278–283 (KKDATP). The chain crosses the membrane as a helical span at residues 284 to 303 (ARTTLGITTVLTMTTLSTIA). Topologically, residues 304-311 (RKSLPRVS) are extracellular. A helical transmembrane segment spans residues 312 to 332 (YVTAMDLFVTVCFLFVFAALM). Residues 333 to 446 (EYATLNYYSS…DVSELDSYSR (114 aa)) are Cytoplasmic-facing. A helical membrane pass occupies residues 447-467 (VFFPTSFLLFNLVYWVGYLYL).

It belongs to the ligand-gated ion channel (TC 1.A.9) family. Gamma-aminobutyric acid receptor (TC 1.A.9.5) subfamily. GABRG3 sub-subfamily. As to quaternary structure, heteropentamer, formed by a combination of alpha (GABRA1-6), beta (GABRB1-3), gamma (GABRG1-3), delta (GABRD), epsilon (GABRE), rho (GABRR1-3), pi (GABRP) and theta (GABRQ) chains, each subunit exhibiting distinct physiological and pharmacological properties. May be palmitoylated. In terms of tissue distribution, expressed in brain.

Its subcellular location is the postsynaptic cell membrane. It localises to the cell membrane. The catalysed reaction is chloride(in) = chloride(out). Functionally, gamma subunit of the heteropentameric ligand-gated chloride channel gated by gamma-aminobutyric acid (GABA), a major inhibitory neurotransmitter in the brain. GABA-gated chloride channels, also named GABA(A) receptors (GABAAR), consist of five subunits arranged around a central pore and contain GABA active binding site(s) located at the alpha and beta subunit interface(s). When activated by GABA, GABAARs selectively allow the flow of chloride across the cell membrane down their electrochemical gradient. This is Gamma-aminobutyric acid receptor subunit gamma-3 from Mus musculus (Mouse).